The chain runs to 503 residues: Maturase K (503 aa).

This sequence belongs to the intron maturase 2 family. MatK subfamily.

The protein localises to the plastid. The protein resides in the chloroplast. Functionally, usually encoded in the trnK tRNA gene intron. Probably assists in splicing its own and other chloroplast group II introns. The protein is Maturase K of Syzygium australe (Brush cherry).